We begin with the raw amino-acid sequence, 419 residues long: S-adenosylmethionine synthase (419 aa).

Position 15 (His-15) interacts with ATP. Asp-17 contributes to the Mg(2+) binding site. Glu-43 is a K(+) binding site. The L-methionine site is built by Glu-56 and Gln-100. The flexible loop stretch occupies residues 100 to 110; that stretch reads QSPDIAQGVDE. Residues 171–173, 248–249, Asp-257, 263–264, Ala-280, and Lys-284 each bind ATP; these read DGK, KF, and RK. An L-methionine-binding site is contributed by Asp-257. Residue Lys-288 participates in L-methionine binding.

Belongs to the AdoMet synthase family. Homotetramer; dimer of dimers. It depends on Mg(2+) as a cofactor. K(+) is required as a cofactor.

The protein resides in the cytoplasm. It catalyses the reaction L-methionine + ATP + H2O = S-adenosyl-L-methionine + phosphate + diphosphate. Its pathway is amino-acid biosynthesis; S-adenosyl-L-methionine biosynthesis; S-adenosyl-L-methionine from L-methionine: step 1/1. Catalyzes the formation of S-adenosylmethionine (AdoMet) from methionine and ATP. The overall synthetic reaction is composed of two sequential steps, AdoMet formation and the subsequent tripolyphosphate hydrolysis which occurs prior to release of AdoMet from the enzyme. The sequence is that of S-adenosylmethionine synthase from Synechococcus sp. (strain WH7803).